Consider the following 510-residue polypeptide: NAD(P)H-quinone oxidoreductase subunit 2 B, chloroplastic (510 aa).

The next 13 membrane-spanning stretches (helical) occupy residues 26-46, 57-77, 99-119, 124-144, 149-169, 183-203, 227-247, 295-315, 323-342, 354-374, 395-415, 418-438, and 484-504; these read LFDGSFIFPEGILIFGLILLL, IPWFYFISSISLVMSITALLF, IFQFLILLCSTLCIPLSVEYI, MAITEFLLFVLTATLGGMFLC, LITIFVAPECFSLCSYLLSGY, YLLMGGASSSILVHGFSWLYG, PGISIALIFITVGIGFKLSPA, WHPLLEILAILSMILGNLIAI, MLAYSSIGQIGYVIIGIIVG, YMLFYISMNLGTFACIVLFGL, ALSLALCLLSLGGLPPLAGFF, LHLFWCGWQAGLYFLVSIGLF, and MIVCVIASTIPGISMNPIIAI.

It belongs to the complex I subunit 2 family. NDH is composed of at least 16 different subunits, 5 of which are encoded in the nucleus.

The protein resides in the plastid. The protein localises to the chloroplast thylakoid membrane. The enzyme catalyses a plastoquinone + NADH + (n+1) H(+)(in) = a plastoquinol + NAD(+) + n H(+)(out). It carries out the reaction a plastoquinone + NADPH + (n+1) H(+)(in) = a plastoquinol + NADP(+) + n H(+)(out). Its function is as follows. NDH shuttles electrons from NAD(P)H:plastoquinone, via FMN and iron-sulfur (Fe-S) centers, to quinones in the photosynthetic chain and possibly in a chloroplast respiratory chain. The immediate electron acceptor for the enzyme in this species is believed to be plastoquinone. Couples the redox reaction to proton translocation, and thus conserves the redox energy in a proton gradient. In Oenothera argillicola (Appalachian evening primrose), this protein is NAD(P)H-quinone oxidoreductase subunit 2 B, chloroplastic.